We begin with the raw amino-acid sequence, 360 residues long: UDP-N-acetylglucosamine--N-acetylmuramyl-(pentapeptide) pyrophosphoryl-undecaprenol N-acetylglucosamine transferase (360 aa).

UDP-N-acetyl-alpha-D-glucosamine contacts are provided by residues 14-16, asparagine 131, arginine 167, serine 195, isoleucine 249, and glutamine 294; that span reads TGG.

The protein belongs to the glycosyltransferase 28 family. MurG subfamily.

The protein localises to the cell inner membrane. The enzyme catalyses di-trans,octa-cis-undecaprenyl diphospho-N-acetyl-alpha-D-muramoyl-L-alanyl-D-glutamyl-meso-2,6-diaminopimeloyl-D-alanyl-D-alanine + UDP-N-acetyl-alpha-D-glucosamine = di-trans,octa-cis-undecaprenyl diphospho-[N-acetyl-alpha-D-glucosaminyl-(1-&gt;4)]-N-acetyl-alpha-D-muramoyl-L-alanyl-D-glutamyl-meso-2,6-diaminopimeloyl-D-alanyl-D-alanine + UDP + H(+). The protein operates within cell wall biogenesis; peptidoglycan biosynthesis. In terms of biological role, cell wall formation. Catalyzes the transfer of a GlcNAc subunit on undecaprenyl-pyrophosphoryl-MurNAc-pentapeptide (lipid intermediate I) to form undecaprenyl-pyrophosphoryl-MurNAc-(pentapeptide)GlcNAc (lipid intermediate II). The sequence is that of UDP-N-acetylglucosamine--N-acetylmuramyl-(pentapeptide) pyrophosphoryl-undecaprenol N-acetylglucosamine transferase from Polaromonas naphthalenivorans (strain CJ2).